Here is a 135-residue protein sequence, read N- to C-terminus: uncharacterized protein (135 aa).

Positions 13–129 constitute a Response regulatory domain; that stretch reads QVLIAENSRF…KILEKVNAAI (117 aa). Asp64 is modified (4-aspartylphosphate).

This is an uncharacterized protein from Leptospira interrogans serogroup Icterohaemorrhagiae serovar copenhageni (strain Fiocruz L1-130).